The following is a 648-amino-acid chain: MNRLPNIAKPPQKSNQRKEKAPPEVPALIADKDRGTYYEKGRFLGKGGFAHCYELTNRATREVVAGKVVPKSMLVKQYQRDKMTQEVQIHRELGHINIVKLFNFFEDNLNVYITLELCARRSLMELHKRRKAVTEPEARYFTHQIVDGVLYLHDLNIIHRDMKLGNLFLNDDLVVKIGDFGLATTVNGDERKKTLCGTPNYIAPEVLNKAGHSFEVDIWAVGCILYILLFGQPPFESKSLEETYSRIRHNNYTIPSIATQPAASLIRKMLDPEPTRRPTAKQVQRDGFFKSGFMPTRLPVSCLTMVPKFGGHETSMMEENVAPRGVDARSQRPLNGRAGLSALPQHIVSNNADRERAQQQAAEATFREPEDAYLSQLFHQVAVLLEQRIPGLEEEEAALDGYQSPECLPVFWISKWVDYSDKYGIGYQLCDNSVGVLFNDNSRIMLDQAGNELTYIEKSNKEHYFSMHSGEMPGLLNKKVTLLKYFRSYMNDHLVKAGEGSEQRAGDDLARLPTLRVWFRTKSAIVLHLSNGTVQINFFNDHVKMMMCPLMQAVTFIDQNKRMLTYKLNNLQRNGCPEKFLHRLKYAKTMIERLMSDANVVSQNPARQPDMPRSMAAARSASAGSRGPNQAASHLPQSASGSNIHPRR.

The interval 1-24 (MNRLPNIAKPPQKSNQRKEKAPPE) is disordered. The region spanning 38 to 289 (YEKGRFLGKG…AKQVQRDGFF (252 aa)) is the Protein kinase domain. ATP is bound by residues 44–52 (LGKGGFAHC) and Lys67. Asp161 serves as the catalytic Proton acceptor. 2 consecutive POLO box domains span residues 412 to 492 (WISK…YMND) and 514 to 596 (TLRV…RLMS). Residues 612-629 (PRSMAAARSASAGSRGPN) are compositionally biased toward low complexity.

The protein belongs to the protein kinase superfamily. Ser/Thr protein kinase family. CDC5/Polo subfamily. As to quaternary structure, interacts with mex-5, mex-6 and spat-1. Embryos.

Its subcellular location is the cytoplasm. The protein resides in the cytoskeleton. It localises to the microtubule organizing center. The protein localises to the centrosome. It is found in the midbody. Its subcellular location is the nucleus. The protein resides in the chromosome. It localises to the centromere. The protein localises to the kinetochore. It catalyses the reaction L-seryl-[protein] + ATP = O-phospho-L-seryl-[protein] + ADP + H(+). It carries out the reaction L-threonyl-[protein] + ATP = O-phospho-L-threonyl-[protein] + ADP + H(+). In terms of biological role, required for oocyte nuclear envelope breakdown before entry of oocyte into spermatheca. In meiotic cells, required for spindle dynamics and probably for spindle attachment to the chromosomes. Zygotic role in the development of the germline and nerve cord. In mitotic cells, plays a role in spindle organization and centrosome maturation. Involved in asymmetric nuclear localization of cdc-25.1 during embryogenesis which affects cell division timing. Together with plk-2, regulates cytoplasm polarity in early embryos. May play a minor role in chromosome pairing and synapsis during oocyte meiosis I. This Caenorhabditis elegans protein is Serine/threonine-protein kinase plk-1 (plk-1).